We begin with the raw amino-acid sequence, 362 residues long: 2-aminoethylphosphonate--pyruvate transaminase (362 aa).

At K193 the chain carries N6-(pyridoxal phosphate)lysine.

The protein belongs to the class-V pyridoxal-phosphate-dependent aminotransferase family. PhnW subfamily. Homodimer. Pyridoxal 5'-phosphate serves as cofactor.

The catalysed reaction is (2-aminoethyl)phosphonate + pyruvate = phosphonoacetaldehyde + L-alanine. Involved in phosphonate degradation. This is 2-aminoethylphosphonate--pyruvate transaminase from Bacteroides fragilis (strain ATCC 25285 / DSM 2151 / CCUG 4856 / JCM 11019 / LMG 10263 / NCTC 9343 / Onslow / VPI 2553 / EN-2).